A 154-amino-acid chain; its full sequence is Small ribosomal subunit protein uS9 (154 aa).

The tract at residues 133 to 154 (RAKESKKYGLKKARKAPQYSKR) is disordered. Residues 140–154 (YGLKKARKAPQYSKR) are compositionally biased toward basic residues.

This sequence belongs to the universal ribosomal protein uS9 family.

The protein is Small ribosomal subunit protein uS9 of Salinispora tropica (strain ATCC BAA-916 / DSM 44818 / JCM 13857 / NBRC 105044 / CNB-440).